The sequence spans 458 residues: ATP synthase subunit beta (458 aa).

ATP is bound at residue glycine 148–threonine 155.

It belongs to the ATPase alpha/beta chains family. As to quaternary structure, F-type ATPases have 2 components, CF(1) - the catalytic core - and CF(0) - the membrane proton channel. CF(1) has five subunits: alpha(3), beta(3), gamma(1), delta(1), epsilon(1). CF(0) has three main subunits: a(1), b(2) and c(9-12). The alpha and beta chains form an alternating ring which encloses part of the gamma chain. CF(1) is attached to CF(0) by a central stalk formed by the gamma and epsilon chains, while a peripheral stalk is formed by the delta and b chains.

The protein localises to the cell inner membrane. The catalysed reaction is ATP + H2O + 4 H(+)(in) = ADP + phosphate + 5 H(+)(out). Its function is as follows. Produces ATP from ADP in the presence of a proton gradient across the membrane. The catalytic sites are hosted primarily by the beta subunits. The chain is ATP synthase subunit beta from Shewanella woodyi (strain ATCC 51908 / MS32).